A 307-amino-acid chain; its full sequence is sn-1-specific diacylglycerol lipase ABHD11 (307 aa).

A mitochondrion-targeting transit peptide spans 1-34 (MLRWARAWRVPRGVLGASSPRRLAVPVTFCSSRS). An N6-succinyllysine modification is found at Lys79. Catalysis depends on Ser133, which acts as the Charge relay system. Lys196 carries the N6-succinyllysine modification. Catalysis depends on charge relay system residues Asp229 and His288.

It belongs to the AB hydrolase superfamily. In terms of assembly, interacts with OGDH and DLST; this interaction maintains the functional lipoylation of the 2-oxoglutarate dehydrogenase complex. In terms of processing, phosphorylated. Expressed in white adipose tissues.

It is found in the mitochondrion. The protein localises to the mitochondrion matrix. It catalyses the reaction 1-octadecanoyl-2-(5Z,8Z,11Z,14Z-eicosatetraenoyl)-sn-glycerol + H2O = 2-(5Z,8Z,11Z,14Z-eicosatetraenoyl)-glycerol + octadecanoate + H(+). The enzyme catalyses a 1,2-diacyl-sn-glycerol + H2O = a 2-acylglycerol + a fatty acid + H(+). It carries out the reaction a 1,3-diacyl-sn-glycerol + H2O = a 1-acyl-sn-glycerol + a fatty acid + H(+). The catalysed reaction is 1-octadecanoyl-2-(9Z-octadecenoyl)-sn-glycerol + H2O = 2-(9Z-octadecenoyl)-glycerol + octadecanoate + H(+). It catalyses the reaction 1-octadecanoyl-2-(4Z,7Z,10Z,13Z,16Z,19Z-docosahexaenoyl)-sn-glycerol + H2O = 2-(4Z,7Z,10Z,13Z,16Z,19Z-docosahexaenoyl)-glycerol + octadecanoate + H(+). The enzyme catalyses 1,2-didecanoylglycerol + H2O = decanoylglycerol + decanoate + H(+). Catalyzes the hydrolysis of diacylglycerol in vitro and may function as a key regulator in lipid metabolism, namely by regulating the intracellular levels of diacylglycerol. 1,2-diacyl-sn-glycerols are the preferred substrate over 1,3-diacyl-sn-glycerols. The enzyme hydrolyzes stearate in preference to palmitate from the sn-1 position of 1,2-diacyl-sn-glycerols. Maintains the functional lipoylation of the 2-oxoglutarate dehydrogenase complex (OGDHc) through its interaction with the OGDHc by preventing the formation of lipoyl adducts. In addition, is also required for the expansion and differentiation of embryonic stem cells (ESCs). This chain is sn-1-specific diacylglycerol lipase ABHD11, found in Mus musculus (Mouse).